Reading from the N-terminus, the 268-residue chain is MNITAIRNEQNQQPLIQLKNINVVFAQKTALQDINLNIYPNSIITIVGPNGGGKSTLLKTLLKLQTPTSGEVIYSKNVRIGYVPQKIHLDHSLPITVERFLSLKKGIKTQEISTALEQLSISHLRKNNMQKLSGGEMQRVLLARAILNKPNLLVLDEPTQGVDITGQAELYQLIHQTQQKLNCAVLMVSHDLHIVMADSKEVLCINQHICCAGTPDVLSNDPTFMRLWGNQIAQNVGFYTHHHNHHHTLHGDVCGCNSSAVHCQNKDK.

The ABC transporter domain maps to 16–231; that stretch reads IQLKNINVVF…PTFMRLWGNQ (216 aa). 48 to 55 serves as a coordination point for ATP; sequence GPNGGGKS.

The protein belongs to the ABC transporter superfamily. Zinc importer (TC 3.A.1.15.5) family. The complex is composed of two ATP-binding proteins (ZnuC), two transmembrane proteins (ZnuB) and a solute-binding protein (ZnuA).

The protein resides in the cell inner membrane. It catalyses the reaction Zn(2+)(out) + ATP(in) + H2O(in) = Zn(2+)(in) + ADP(in) + phosphate(in) + H(+)(in). In terms of biological role, part of the ABC transporter complex ZnuABC involved in zinc import. Responsible for energy coupling to the transport system. This Haemophilus influenzae (strain ATCC 51907 / DSM 11121 / KW20 / Rd) protein is Zinc import ATP-binding protein ZnuC.